Consider the following 442-residue polypeptide: Amino-acid acetyltransferase (442 aa).

An N-acetyltransferase domain is found at 295–442 (EQARAATIED…RSKVLSKTIS (148 aa)).

It belongs to the acetyltransferase family. ArgA subfamily.

Its subcellular location is the cytoplasm. It catalyses the reaction L-glutamate + acetyl-CoA = N-acetyl-L-glutamate + CoA + H(+). Its pathway is amino-acid biosynthesis; L-arginine biosynthesis; N(2)-acetyl-L-ornithine from L-glutamate: step 1/4. This is Amino-acid acetyltransferase from Aeromonas salmonicida (strain A449).